The following is a 250-amino-acid chain: Probable transcriptional regulatory protein Cvib_1432 (250 aa).

The protein belongs to the TACO1 family.

Its subcellular location is the cytoplasm. The sequence is that of Probable transcriptional regulatory protein Cvib_1432 from Chlorobium phaeovibrioides (strain DSM 265 / 1930) (Prosthecochloris vibrioformis (strain DSM 265)).